Reading from the N-terminus, the 376-residue chain is Carboxylic ester hydrolase LipN (376 aa).

Residues serine 216, aspartate 316, and histidine 346 contribute to the active site.

The protein belongs to the 'GDXG' lipolytic enzyme family.

The protein resides in the cytoplasm. It carries out the reaction a carboxylic ester + H2O = an alcohol + a carboxylate + H(+). It catalyses the reaction an acetyl ester + H2O = an aliphatic alcohol + acetate + H(+). The catalysed reaction is a butanoate ester + H2O = an aliphatic alcohol + butanoate + H(+). The enzyme catalyses an octanoate ester + H2O = an aliphatic alcohol + octanoate + H(+). It carries out the reaction decanoate ester + H2O = decanoate + an aliphatic alcohol + H(+). It catalyses the reaction a dodecanoate ester + H2O = an aliphatic alcohol + dodecanoate + H(+). The catalysed reaction is 1,2,3-tributanoylglycerol + H2O = dibutanoylglycerol + butanoate + H(+). The enzyme catalyses 4-acetoxyphenol + H2O = hydroquinone + acetate + H(+). Its activity is regulated as follows. Completely inhibited by tetrahydrolipstatin (THL), RHC-80267 and N-bromosuccinimide. Functionally, non specific carboxylic ester hydrolase. Hydrolyzes various pNP-esters, with a preference for short carbon chain substrates. Can also hydrolyze tributyrin to di- and monobutyrin and 4-hydroxyphenylacetate to hydroquinone. The sequence is that of Carboxylic ester hydrolase LipN from Mycobacterium tuberculosis (strain ATCC 25618 / H37Rv).